The following is a 429-amino-acid chain: Bifunctional protein GlmU (429 aa).

Residues Met-1–Lys-223 are pyrophosphorylase. UDP-N-acetyl-alpha-D-glucosamine-binding positions include Leu-8 to Gly-11, Lys-22, and Gly-81 to Thr-82. Asp-102 serves as a coordination point for Mg(2+). The UDP-N-acetyl-alpha-D-glucosamine site is built by Gly-135, Glu-149, Asn-164, and Asn-221. Asn-221 serves as a coordination point for Mg(2+). Positions Phe-224–Gln-244 are linker. Residues Gly-245–Lys-429 are N-acetyltransferase. 2 residues coordinate UDP-N-acetyl-alpha-D-glucosamine: Arg-308 and Lys-325. The active-site Proton acceptor is the His-336. UDP-N-acetyl-alpha-D-glucosamine is bound by residues Tyr-339 and Asn-350. Acetyl-CoA is bound by residues Asn-359–Tyr-360, Ser-378, Ala-396, and Arg-413.

The protein in the N-terminal section; belongs to the N-acetylglucosamine-1-phosphate uridyltransferase family. This sequence in the C-terminal section; belongs to the transferase hexapeptide repeat family. As to quaternary structure, homotrimer. Mg(2+) is required as a cofactor.

The protein resides in the cytoplasm. It carries out the reaction alpha-D-glucosamine 1-phosphate + acetyl-CoA = N-acetyl-alpha-D-glucosamine 1-phosphate + CoA + H(+). It catalyses the reaction N-acetyl-alpha-D-glucosamine 1-phosphate + UTP + H(+) = UDP-N-acetyl-alpha-D-glucosamine + diphosphate. It functions in the pathway nucleotide-sugar biosynthesis; UDP-N-acetyl-alpha-D-glucosamine biosynthesis; N-acetyl-alpha-D-glucosamine 1-phosphate from alpha-D-glucosamine 6-phosphate (route II): step 2/2. The protein operates within nucleotide-sugar biosynthesis; UDP-N-acetyl-alpha-D-glucosamine biosynthesis; UDP-N-acetyl-alpha-D-glucosamine from N-acetyl-alpha-D-glucosamine 1-phosphate: step 1/1. It participates in bacterial outer membrane biogenesis; LPS lipid A biosynthesis. Its function is as follows. Catalyzes the last two sequential reactions in the de novo biosynthetic pathway for UDP-N-acetylglucosamine (UDP-GlcNAc). The C-terminal domain catalyzes the transfer of acetyl group from acetyl coenzyme A to glucosamine-1-phosphate (GlcN-1-P) to produce N-acetylglucosamine-1-phosphate (GlcNAc-1-P), which is converted into UDP-GlcNAc by the transfer of uridine 5-monophosphate (from uridine 5-triphosphate), a reaction catalyzed by the N-terminal domain. The sequence is that of Bifunctional protein GlmU from Campylobacter jejuni subsp. jejuni serotype O:23/36 (strain 81-176).